Consider the following 157-residue polypeptide: Ribosome maturation factor RimM (157 aa).

The 68-residue stretch at 89–156 (PGEYYHVDLI…DRLLIDPEFV (68 aa)) folds into the PRC barrel domain.

The protein belongs to the RimM family. Binds ribosomal protein uS19.

It is found in the cytoplasm. Functionally, an accessory protein needed during the final step in the assembly of 30S ribosomal subunit, possibly for assembly of the head region. Essential for efficient processing of 16S rRNA. May be needed both before and after RbfA during the maturation of 16S rRNA. It has affinity for free ribosomal 30S subunits but not for 70S ribosomes. This chain is Ribosome maturation factor RimM, found in Rhizorhabdus wittichii (strain DSM 6014 / CCUG 31198 / JCM 15750 / NBRC 105917 / EY 4224 / RW1) (Sphingomonas wittichii).